The primary structure comprises 176 residues: NADH-quinone oxidoreductase subunit B 1 (176 aa).

[4Fe-4S] cluster is bound by residues C55, C56, C120, and C150.

This sequence belongs to the complex I 20 kDa subunit family. In terms of assembly, NDH-1 is composed of 14 different subunits. Subunits NuoB, C, D, E, F, and G constitute the peripheral sector of the complex. [4Fe-4S] cluster serves as cofactor.

It localises to the cell inner membrane. The enzyme catalyses a quinone + NADH + 5 H(+)(in) = a quinol + NAD(+) + 4 H(+)(out). In terms of biological role, NDH-1 shuttles electrons from NADH, via FMN and iron-sulfur (Fe-S) centers, to quinones in the respiratory chain. Couples the redox reaction to proton translocation (for every two electrons transferred, four hydrogen ions are translocated across the cytoplasmic membrane), and thus conserves the redox energy in a proton gradient. In Cereibacter sphaeroides (strain ATCC 17029 / ATH 2.4.9) (Rhodobacter sphaeroides), this protein is NADH-quinone oxidoreductase subunit B 1.